The sequence spans 554 residues: Gamma-aminobutyric acid receptor subunit alpha-4 (554 aa).

The signal sequence occupies residues 1-35; it reads MVSAKKVPAIALSAGVSFALLRFLCLAVCLNESPG. At 36–259 the chain is on the extracellular side; it reads QNQKEEKLCT…FHLRRKMGYF (224 aa). N47 is a glycosylation site (N-linked (GlcNAc...) asparagine). R100 is a 4-aminobutanoate binding site. 2 N-linked (GlcNAc...) asparagine glycosylation sites follow: N144 and N157. T163 contacts 4-aminobutanoate. Cysteines 172 and 186 form a disulfide. Residues 260–280 traverse the membrane as a helical segment; sequence MIQTYIPCIMTVILSQVSFWI. Residues 281–284 are Cytoplasmic-facing; sequence NKES. A helical membrane pass occupies residues 285–305; sequence VPARTVFGITTVLTMTTLSIS. Topologically, residues 306–318 are extracellular; that stretch reads ARHSLPKVSYATA. The helical transmembrane segment at 319 to 341 threads the bilayer; the sequence is MDWFIAVCFAFVFSALIEFAAVN. The Cytoplasmic segment spans residues 342–517; the sequence is YFTNIQMEKA…PPPSGSGTSK (176 aa). 4 disordered regions span residues 350-381, 397-435, 452-471, and 495-515; these read KAKR…QNTN, ESDV…SPNP, PSAS…ASVG, and ATGK…GSGT. A compositionally biased stretch (low complexity) spans 410-422; sequence SSKSSTVVQESSK. The span at 502–511 shows a compositional bias: pro residues; sequence TPPPSAPPPS. A helical transmembrane segment spans residues 518–540; it reads IDKYARILFPVTFGAFNMVYWVV. Topologically, residues 541 to 554 are extracellular; that stretch reads YLSKDTMEKSESLM.

Belongs to the ligand-gated ion channel (TC 1.A.9) family. Gamma-aminobutyric acid receptor (TC 1.A.9.5) subfamily. GABRA4 sub-subfamily. As to quaternary structure, heteropentamer, formed by a combination of alpha (GABRA1-6), beta (GABRB1-3), gamma (GABRG1-3), delta (GABRD), epsilon (GABRE), rho (GABRR1-3), pi (GABRP) and theta (GABRQ) chains, each subunit exhibiting distinct physiological and pharmacological properties. As to expression, expressed in the brain.

The protein resides in the cell membrane. Its subcellular location is the postsynaptic cell membrane. The enzyme catalyses chloride(in) = chloride(out). Its activity is regulated as follows. Potentiated by histamine. Its function is as follows. Alpha subunit of the heteropentameric ligand-gated chloride channel gated by gamma-aminobutyric acid (GABA), a major inhibitory neurotransmitter in the brain. GABA-gated chloride channels, also named GABA(A) receptors (GABAAR), consist of five subunits arranged around a central pore and contain GABA active binding site(s) located at the alpha and beta subunit interface(s). When activated by GABA, GABAARs selectively allow the flow of chloride anions across the cell membrane down their electrochemical gradient. GABAARs containing alpha-4 are predominantly extrasynaptic, contributing to tonic inhibition in dentate granule cells and thalamic relay neurons. Extrasynaptic alpha-4-containing GABAARs control levels of excitability and network activity. GABAAR containing alpha-4-beta-3-delta subunits can simultaneously bind GABA and histamine where histamine binds at the interface of two neighboring beta subunits, which may be involved in the regulation of sleep and wakefulness. The protein is Gamma-aminobutyric acid receptor subunit alpha-4 of Homo sapiens (Human).